The chain runs to 656 residues: UvrABC system protein C (656 aa).

Residues lysine 41–isoleucine 120 enclose the GIY-YIG domain. The UVR domain maps to aspartate 230–leucine 265.

The protein belongs to the UvrC family. Interacts with UvrB in an incision complex.

It is found in the cytoplasm. Its function is as follows. The UvrABC repair system catalyzes the recognition and processing of DNA lesions. UvrC both incises the 5' and 3' sides of the lesion. The N-terminal half is responsible for the 3' incision and the C-terminal half is responsible for the 5' incision. The protein is UvrABC system protein C of Prochlorococcus marinus subsp. pastoris (strain CCMP1986 / NIES-2087 / MED4).